A 206-amino-acid chain; its full sequence is Probable NAD(+) phosphorylase Rv3189 (206 aa).

It belongs to the MbcT/ParT/Res family. As to quaternary structure, forms a heterotetramer with cognate antitoxin Rv3188.

The enzyme catalyses phosphate + NAD(+) = ADP-alpha-D-ribose 1''-phosphate + nicotinamide + H(+). Probable toxic component of a type II toxin-antitoxin (TA) system. Degrades NAD(+) by phosphorolysis. Neutralized by its cognate antitoxin Rv3188. In Mycobacterium tuberculosis (strain ATCC 25618 / H37Rv), this protein is Probable NAD(+) phosphorylase Rv3189.